The following is a 312-amino-acid chain: Ubiquinone biosynthesis O-methyltransferase, mitochondrial (312 aa).

The transit peptide at 1 to 32 directs the protein to the mitochondrion; the sequence is MLLRSRFLKVIHVRKQLSACSRFAIQTQTRCK. S-adenosyl-L-methionine contacts are provided by Arg-68, Gly-130, Asp-153, and Met-196. Mg(2+) is bound by residues Glu-197, Glu-200, and His-201.

This sequence belongs to the class I-like SAM-binding methyltransferase superfamily. UbiG/COQ3 family. In terms of assembly, component of a multi-subunit COQ enzyme complex, composed of at least COQ3, COQ4, COQ5, COQ6, COQ7 and COQ9. Interacts directly with COQ4. Mg(2+) serves as cofactor.

The protein resides in the mitochondrion inner membrane. The enzyme catalyses 3,4-dihydroxy-5-(all-trans-hexaprenyl)benzoate + S-adenosyl-L-methionine = 4-hydroxy-3-methoxy-5-(all-trans-hexaprenyl)benzoate + S-adenosyl-L-homocysteine + H(+). It carries out the reaction a 3-demethylubiquinone + S-adenosyl-L-methionine = a ubiquinone + S-adenosyl-L-homocysteine. It catalyses the reaction 3-demethylubiquinol-6 + S-adenosyl-L-methionine = ubiquinol-6 + S-adenosyl-L-homocysteine + H(+). It functions in the pathway cofactor biosynthesis; ubiquinone biosynthesis. Its activity is regulated as follows. Regulated in response to catabolite repression. O-methyltransferase required for two non-consecutive steps during ubiquinone biosynthesis. Catalyzes the 2 O-methylation of 3,4-dihydroxy-5-(all-trans-hexaprenyl)benzoic acid into 4-hydroxy-3-methoxy-5-(all-trans-hexaprenyl)benzoic acid. Also catalyzes the last step of ubiquinone biosynthesis by mediating methylation of 3-demethylubiquinone into ubiquinone. Also able to mediate the methylation of 3-demethylubiquinol-6 into ubiquinol-6. In Saccharomyces cerevisiae (strain ATCC 204508 / S288c) (Baker's yeast), this protein is Ubiquinone biosynthesis O-methyltransferase, mitochondrial.